Consider the following 89-residue polypeptide: Small ribosomal subunit protein bS20 (89 aa).

The interval Met-1–Arg-25 is disordered.

It belongs to the bacterial ribosomal protein bS20 family.

In terms of biological role, binds directly to 16S ribosomal RNA. The protein is Small ribosomal subunit protein bS20 of Paracoccus denitrificans (strain Pd 1222).